A 131-amino-acid polypeptide reads, in one-letter code: Small ribosomal subunit protein bS6 (131 aa).

The tract at residues 96 to 131 (VTEASPMAKAKDERDSRRGPAGDRSYDEANAEEIAE) is disordered. Residues 104-122 (KAKDERDSRRGPAGDRSYD) are compositionally biased toward basic and acidic residues.

The protein belongs to the bacterial ribosomal protein bS6 family.

Functionally, binds together with bS18 to 16S ribosomal RNA. The sequence is that of Small ribosomal subunit protein bS6 from Shewanella sp. (strain MR-4).